Reading from the N-terminus, the 117-residue chain is NADH-ubiquinone oxidoreductase chain 3 (117 aa).

3 helical membrane-spanning segments follow: residues 1–21, 57–77, and 86–106; these read MLMLSIMATIIFIITIVVMML, FFLIAIIFLIFDVEIALLLPM, and LMNWTMTSFFFIFILLIGLYH.

Belongs to the complex I subunit 3 family.

The protein localises to the mitochondrion membrane. It catalyses the reaction a ubiquinone + NADH + 5 H(+)(in) = a ubiquinol + NAD(+) + 4 H(+)(out). Core subunit of the mitochondrial membrane respiratory chain NADH dehydrogenase (Complex I) that is believed to belong to the minimal assembly required for catalysis. Complex I functions in the transfer of electrons from NADH to the respiratory chain. The immediate electron acceptor for the enzyme is believed to be ubiquinone. The sequence is that of NADH-ubiquinone oxidoreductase chain 3 (ND3) from Anopheles quadrimaculatus (Common malaria mosquito).